The following is a 287-amino-acid chain: ATP synthase gamma chain (287 aa).

Belongs to the ATPase gamma chain family. F-type ATPases have 2 components, CF(1) - the catalytic core - and CF(0) - the membrane proton channel. CF(1) has five subunits: alpha(3), beta(3), gamma(1), delta(1), epsilon(1). CF(0) has three main subunits: a, b and c.

The protein localises to the cell inner membrane. In terms of biological role, produces ATP from ADP in the presence of a proton gradient across the membrane. The gamma chain is believed to be important in regulating ATPase activity and the flow of protons through the CF(0) complex. The chain is ATP synthase gamma chain from Klebsiella pneumoniae (strain 342).